The following is a 119-amino-acid chain: Large ribosomal subunit protein bL20 (119 aa).

This sequence belongs to the bacterial ribosomal protein bL20 family.

Functionally, binds directly to 23S ribosomal RNA and is necessary for the in vitro assembly process of the 50S ribosomal subunit. It is not involved in the protein synthesizing functions of that subunit. The sequence is that of Large ribosomal subunit protein bL20 from Stenotrophomonas maltophilia (strain R551-3).